The chain runs to 311 residues: Taste receptor type 2 member 9 (311 aa).

Over 1–9 the chain is Extracellular; sequence MPSTIEAIY. The helical transmembrane segment at 10–32 threads the bilayer; the sequence is IILIAGELTIGIWGNGFIVLVNC. Residues 33–52 lie on the Cytoplasmic side of the membrane; that stretch reads IDWLKRRDVSLIDIILISLA. Residues 53–72 form a helical membrane-spanning segment; that stretch reads ISRICLLCVISLDGFFILLF. Over 73–86 the chain is Extracellular; that stretch reads PGTYDINVLESIMD. Residues 87-109 traverse the membrane as a helical segment; sequence AVWTFANNSSLWFTSCLSIFYLL. The Cytoplasmic portion of the chain corresponds to 110–128; it reads KIANISHPFFFWLKLKINK. A helical membrane pass occupies residues 129-146; it reads VILAILLGSFLISLIISF. Residues 147-179 lie on the Extracellular side of the membrane; that stretch reads PINGXWYHLFKVSHEENITWAFKVSTIPGAFKQ. N-linked (GlcNAc...) asparagine glycosylation occurs at asparagine 163. The chain crosses the membrane as a helical span at residues 180-202; the sequence is LTLNLGAMVPFMLCLISFFLLLF. Topologically, residues 203–233 are cytoplasmic; it reads SLVRHTKQIQLHATGLRDPSTEAHMRAIKAV. The helical transmembrane segment at 234–256 threads the bilayer; the sequence is IIFLLLLIVYYPVFLVMTSSTLI. Residues 257-260 are Extracellular-facing; it reads PQGK. A helical transmembrane segment spans residues 261–283; sequence LVLMIGDIVTVIFPSSHSFILIM. At 284 to 311 the chain is on the cytoplasmic side; the sequence is GNSKLREAFLKMLRFVKGFLRRRKPFGP.

The protein belongs to the G-protein coupled receptor T2R family.

The protein resides in the membrane. Gustducin-coupled receptor implicated in the perception of bitter compounds in the oral cavity and the gastrointestinal tract. Signals through PLCB2 and the calcium-regulated cation channel TRPM5. This Papio hamadryas (Hamadryas baboon) protein is Taste receptor type 2 member 9 (TAS2R9).